The sequence spans 141 residues: Hemoglobin subunit alpha (141 aa).

Residues 1–141 (VLSDNDKTNV…VSTVLTSKYR (141 aa)) form the Globin domain. At Ser-3 the chain carries Phosphoserine. Lys-7 carries the N6-succinyllysine modification. The residue at position 8 (Thr-8) is a Phosphothreonine. Lys-11 is modified (N6-succinyllysine). Residue Lys-16 is modified to N6-acetyllysine; alternate. At Lys-16 the chain carries N6-succinyllysine; alternate. A Phosphotyrosine modification is found at Tyr-24. Ser-35 carries the post-translational modification Phosphoserine. Position 40 is an N6-succinyllysine (Lys-40). His-58 is an O2 binding site. His-87 contributes to the heme b binding site. Ser-102 is modified (phosphoserine). Residue Thr-108 is modified to Phosphothreonine. Phosphoserine is present on Ser-124. Residues Thr-134 and Thr-137 each carry the phosphothreonine modification. Ser-138 is modified (phosphoserine).

It belongs to the globin family. Heterotetramer of two alpha chains and two beta chains. In terms of tissue distribution, red blood cells.

In terms of biological role, involved in oxygen transport from the lung to the various peripheral tissues. Its function is as follows. Hemopressin acts as an antagonist peptide of the cannabinoid receptor CNR1. Hemopressin-binding efficiently blocks cannabinoid receptor CNR1 and subsequent signaling. In Loxodonta africana (African elephant), this protein is Hemoglobin subunit alpha (HBA).